The primary structure comprises 495 residues: UDP-glycosyltransferase 73E1 (495 aa).

UDP-alpha-D-glucose contacts are provided by residues S299, 355-356 (WA), 373-381 (HCGWNSTIE), and 395-398 (FADQ).

This sequence belongs to the UDP-glycosyltransferase family.

Functionally, may glycosylate diterpenes or flavonols in leaves. This is UDP-glycosyltransferase 73E1 from Stevia rebaudiana (Stevia).